The chain runs to 375 residues: F420-dependent formate dehydrogenase 2 subunit beta (375 aa).

4Fe-4S ferredoxin-type domains follow at residues 268-291 (PEPE…DVCP) and 320-349 (IRLS…AKIY). Positions 280, 283, 286, 290, 329, 332, 335, and 339 each coordinate [4Fe-4S] cluster.

Belongs to the FrhB family. Dimer of an alpha (FdhA2) and a beta (FdhB2) subunit. It depends on [4Fe-4S] cluster as a cofactor. FAD is required as a cofactor. Zn(2+) serves as cofactor.

The enzyme catalyses oxidized coenzyme F420-(gamma-L-Glu)(n) + formate + 2 H(+) = reduced coenzyme F420-(gamma-L-Glu)(n) + CO2. Its function is as follows. Catalyzes the oxidation of formate to carbon dioxide, with coenzyme F420 as the electron acceptor. In vitro can also use methyl viologen as electron acceptor. The polypeptide is F420-dependent formate dehydrogenase 2 subunit beta (Methanococcus maripaludis (strain DSM 14266 / JCM 13030 / NBRC 101832 / S2 / LL)).